A 361-amino-acid chain; its full sequence is Histidinol-phosphate aminotransferase (361 aa).

Residue K219 is modified to N6-(pyridoxal phosphate)lysine.

This sequence belongs to the class-II pyridoxal-phosphate-dependent aminotransferase family. Histidinol-phosphate aminotransferase subfamily. Homodimer. Pyridoxal 5'-phosphate is required as a cofactor.

The enzyme catalyses L-histidinol phosphate + 2-oxoglutarate = 3-(imidazol-4-yl)-2-oxopropyl phosphate + L-glutamate. The protein operates within amino-acid biosynthesis; L-histidine biosynthesis; L-histidine from 5-phospho-alpha-D-ribose 1-diphosphate: step 7/9. The protein is Histidinol-phosphate aminotransferase of Acinetobacter baumannii (strain ATCC 17978 / DSM 105126 / CIP 53.77 / LMG 1025 / NCDC KC755 / 5377).